We begin with the raw amino-acid sequence, 1035 residues long: Teashirt homolog 2 (1035 aa).

The tract at residues 1 to 92 (MPRRKQQAPK…ESLLSDASDQ (92 aa)) is disordered. Residues 13 to 42 (AGYAQEEQLKEEEEIKEEEEEEEDSGSVAQ) are a coiled coil. A compositionally biased stretch (acidic residues) spans 21 to 37 (LKEEEEIKEEEEEEEDS). Composition is skewed to polar residues over residues 39 to 49 (SVAQLQGSNDP) and 66 to 92 (SYQNSPGSHLSNQDAENESLLSDASDQ). Residue lysine 189 forms a Glycyl lysine isopeptide (Lys-Gly) (interchain with G-Cter in SUMO2) linkage. 2 C2H2-type zinc fingers span residues 216–240 (FRCRQCSAAYDTLVELTVHMNETGH) and 276–300 (LKCMFCGDSFDSLQDLSVHMIKTKH). The interval 240–266 (HYQDDNRKKDKLRPTSYSKPRKRAFQD) is disordered. Residues lysine 307 and lysine 316 each participate in a glycyl lysine isopeptide (Lys-Gly) (interchain with G-Cter in SUMO2) cross-link. The C2H2-type 3; atypical zinc-finger motif lies at 381–405 (LKCMECGSSHDTLQQLTTHMMVTGH). Residue lysine 418 forms a Glycyl lysine isopeptide (Lys-Gly) (interchain with G-Cter in SUMO2) linkage. The segment covering 432 to 450 (SLSDAPSSDSLAPKPSSNS) has biased composition (low complexity). Positions 432–496 (SLSDAPSSDS…DPLQKPLDPA (65 aa)) are disordered. A compositionally biased stretch (basic and acidic residues) spans 460–483 (ELKRESKKEKPEELRTDEKVLKSE). Glycyl lysine isopeptide (Lys-Gly) (interchain with G-Cter in SUMO2) cross-links involve residues lysine 462, lysine 481, lysine 498, and lysine 602. Disordered regions lie at residues 600–674 (QVKK…VEPV) and 764–791 (QPIDLTKSKSKKAESSQAQSCTSPPQKH). Residues 601–669 (VKKEPEDKEE…KDGGEKEKAQ (69 aa)) are compositionally biased toward basic and acidic residues. Residues lysine 801 and lysine 821 each participate in a glycyl lysine isopeptide (Lys-Gly) (interchain with G-Cter in SUMO2) cross-link. Residues 842-912 (RKGRQSNWNP…NVKYQLRKTG (71 aa)) constitute a DNA-binding region (homeobox). The C2H2-type 4 zinc finger occupies 927–949 (FYCSDCASQFRTPSTYISHLESH). Residues 968–977 (VEQEISRVSS) show a composition bias toward low complexity. 2 disordered regions span residues 968 to 987 (VEQEISRVSSAQRSPETIAG) and 1015 to 1035 (SKTHSKSPEHHAQFVTDVDEE). A Phosphoserine modification is found at serine 981. The C2H2-type 5 zinc-finger motif lies at 995–1018 (FKCKLCCRTFVSKHAVKLHLSKTH).

This sequence belongs to the teashirt C2H2-type zinc-finger protein family. Interacts (via homeobox domain) with APBB1 (via PID domain 1). In terms of processing, sumoylated.

The protein localises to the nucleus. Functionally, probable transcriptional regulator involved in developmental processes. May act as a transcriptional repressor (Potential). The chain is Teashirt homolog 2 (TSHZ2) from Sus scrofa (Pig).